The chain runs to 299 residues: ATP phosphoribosyltransferase (299 aa).

Belongs to the ATP phosphoribosyltransferase family. Long subfamily. Requires Mg(2+) as cofactor.

The protein localises to the cytoplasm. The catalysed reaction is 1-(5-phospho-beta-D-ribosyl)-ATP + diphosphate = 5-phospho-alpha-D-ribose 1-diphosphate + ATP. It functions in the pathway amino-acid biosynthesis; L-histidine biosynthesis; L-histidine from 5-phospho-alpha-D-ribose 1-diphosphate: step 1/9. Feedback inhibited by histidine. Functionally, catalyzes the condensation of ATP and 5-phosphoribose 1-diphosphate to form N'-(5'-phosphoribosyl)-ATP (PR-ATP). Has a crucial role in the pathway because the rate of histidine biosynthesis seems to be controlled primarily by regulation of HisG enzymatic activity. This is ATP phosphoribosyltransferase from Rhodopirellula baltica (strain DSM 10527 / NCIMB 13988 / SH1).